The chain runs to 616 residues: Glycogenin-1 (616 aa).

Residues L10, Y16, and R95 each contribute to the UDP site. Residues L10, Y16, R95, K104, D120, D122, N158, S159, D185, D188, and Q189 each contribute to the UDP-alpha-D-glucose site. D120 and D122 together coordinate UDP. Residues D120 and D122 each coordinate Mn(2+). O-linked (Glc...) tyrosine glycosylation occurs at Y230. The UDP site is built by H247, G250, and K253. Position 247 (H247) interacts with Mn(2+). UDP-alpha-D-glucose is bound by residues G250 and K253. The span at 283 to 302 (HQLNNEVSKPKISDSDKTET) shows a compositional bias: basic and acidic residues. 4 disordered regions span residues 283-320 (HQLN…PTTN), 335-354 (NQNA…NPVP), 371-525 (TNQP…EKDK), and 553-588 (RDAT…EMPN). Basic and acidic residues predominate over residues 377 to 386 (ESREYSKEND). The segment covering 400 to 419 (SPPNSTQELNSSYSVVSTQA) has biased composition (polar residues). Residues 450-461 (STAASSNNNVSN) are compositionally biased toward low complexity. 2 stretches are compositionally biased toward polar residues: residues 462 to 485 (QPDG…PSNP) and 492 to 503 (DNIQKPSVSTND). Residues 567–576 (DKQEDMKLTA) are compositionally biased toward basic and acidic residues. Residues 577–586 (EETNQPQQEM) show a composition bias toward polar residues. Residue Y598 is glycosylated (O-linked (Glc...) tyrosine).

The protein belongs to the glycosyltransferase 8 family. Glycogenin subfamily. The cofactor is Mn(2+).

It is found in the cytoplasm. The protein resides in the vacuole. The enzyme catalyses L-tyrosyl-[glycogenin] + UDP-alpha-D-glucose = alpha-D-glucosyl-L-tyrosyl-[glycogenin] + UDP + H(+). It catalyses the reaction [1,4-alpha-D-glucosyl](n)-L-tyrosyl-[glycogenin] + UDP-alpha-D-glucose = [1,4-alpha-D-glucosyl](n+1)-L-tyrosyl-[glycogenin] + UDP + H(+). Its function is as follows. Self-glucosylating initiator of glycogen synthesis. It catalyzes the formation of a short alpha (1,4)-glucosyl chain covalently attached via a glucose 1-O-tyrosyl linkage to internal tyrosine residues and these chains act as primers for the elongation reaction catalyzed by glycogen synthase. Capable of transferring glucosyl residues to unbound acceptors such as free oligoglucans or oligoglucan derivatives. The chain is Glycogenin-1 from Saccharomyces cerevisiae (strain ATCC 204508 / S288c) (Baker's yeast).